The sequence spans 2472 residues: Centrosomal protein of 290 kDa (2472 aa).

The tract at residues 1–689 is self-association (with itself or C-terminus); that stretch reads MPPNIKWKEL…MESKNAEGIF (689 aa). 3 coiled-coil regions span residues 59–747, 1129–1392, and 1459–1492; these read MKMK…LRQS, RQRI…QQSK, and QVIL…ILSR. Residues 128-164 are disordered; it reads DRELEDMEKELDKEKKVNEQLALRNEEAENENSKLRR. Residues 137-164 show a composition bias toward basic and acidic residues; that stretch reads ELDKEKKVNEQLALRNEEAENENSKLRR. Positions 690-890 are interaction with IQCB1; that stretch reads DASLHLKAQV…TVLQVNEKSL (201 aa). 2 disordered regions span residues 1691-1713 and 2451-2472; these read AHKD…SRAP and PSPL…FPIY. Polar residues predominate over residues 1697–1713; it reads SLKSELQAQKEANSRAP. The interval 1960–2472 is self-association (with itself or N-terminus); that stretch reads TTGMTVDQVL…GESPHSFPIY (513 aa).

As to quaternary structure, part of the tectonic-like complex (also named B9 complex). Interacts with ATF4 via its N-terminal region. Associates with the BBSome complex, interacting (via N-terminus) with BBS4. Interacts with IQCB1/NPHP5; IQCB1 and CEP290/NPHP6 are proposed to form a functional NPHP5-6 module localized to the centrosome. Interacts with NPHP4; the interaction likely requires additional interactors. Interacts with ZNF423, FAM161A, CEP162, CEP162, CEP131, TALPID3, CCDC13, CC2D2A, RPGRIP1. Can self-associate (homo- or heteromeric). Interacts with CCP110; required for suppressing cilia formation. Interacts with RPGR. Associates (via C-terminus) with microtubules; association to microtubule is reduced in response to cellular stress, such as ultraviolet light (UV) radiation or heat shock, in a process that requires p38 MAP kinase signaling. Interacts with FAM161A. Interacts with PCM1. Interacts with CCDC66. Interacts with ARMC9 and CSPP1. Post-translationally, ubiquitinated. May undergo monoubiquitination; monoubiquitination is inhibited in response to cellular stress, such as ultraviolet light (UV) radiation or heat shock, but does not cause its displacement from centriolar satellites. In terms of tissue distribution, expressed in multiple organs during early postnatal development, with highest levels in hindbrain.

The protein localises to the cytoplasm. Its subcellular location is the cytoskeleton. The protein resides in the microtubule organizing center. It is found in the centrosome. It localises to the centriolar satellite. The protein localises to the nucleus. Its subcellular location is the centriole. The protein resides in the cell projection. It is found in the cilium. It localises to the cilium basal body. The protein localises to the cytoplasmic vesicle. Involved in early and late steps in cilia formation. Its association with CCP110 is required for inhibition of primary cilia formation by CCP110. May play a role in early ciliogenesis in the disappearance of centriolar satellites and in the transition of primary ciliar vesicles (PCVs) to capped ciliary vesicles (CCVs). Required for the centrosomal recruitment of RAB8A and for the targeting of centriole satellite proteins to centrosomes such as of PCM1. Required for the correct localization of ciliary and phototransduction proteins in retinal photoreceptor cells; may play a role in ciliary transport processes. Required for efficient recruitment of RAB8A to primary cilium. In the ciliary transition zone is part of the tectonic-like complex (also named B9 complex) which is required for tissue-specific ciliogenesis and may regulate ciliary membrane composition. Involved in regulation of the BBSome complex integrity, specifically for presence of BBS2, BBS5 and BBS8/TTC8 in the complex, and in ciliary targeting of selected BBSome cargos. May play a role in controlling entry of the BBSome complex to cilia possibly implicating IQCB1/NPHP5. Activates ATF4-mediated transcription. The chain is Centrosomal protein of 290 kDa from Mus musculus (Mouse).